Reading from the N-terminus, the 669-residue chain is Diacylglycerol lipase-beta (669 aa).

Residues 1 to 17 (MPGMVLFGRRWSLASDD) lie on the Cytoplasmic side of the membrane. Residues 18 to 38 (LVFPGSFELFLRVLWWIVSLT) form a helical membrane-spanning segment. At 39-58 (LYLTHRRRLDCPGGVLLSTY) the chain is on the extracellular side. Residues 59–79 (LIVLLVLLAVIICTVLAIVCV) form a helical membrane-spanning segment. At 80-102 (SMRGTICNPGPRKSMSKLLYIRL) the chain is on the cytoplasmic side. A helical membrane pass occupies residues 103 to 123 (ALFLPEMVWASLGAAWVAKGI). The Extracellular segment spans residues 124 to 128 (QCDRT). The helical transmembrane segment at 129–149 (VVIGIIATVIVSWIVIAATMV) threads the bilayer. Residues 150 to 669 (TIIFVFDPLG…CPGQGGSSVP (520 aa)) lie on the Cytoplasmic side of the membrane. Active-site charge relay system residues include serine 443 and aspartate 495. A phosphoserine mark is found at serine 570, serine 578, and serine 582.

The protein belongs to the AB hydrolase superfamily. Lipase family. Ca(2+) is required as a cofactor. Expressed in liver and immune cells such as macrophages and microglias. In embryonic brains present in axonal tracts, while in adults localizes to dendritic fields, correlating with the developmental change in requirement for 2-AG synthesis from the pre- to the postsynaptic compartment (at protein level).

Its subcellular location is the cell membrane. It carries out the reaction a 1,2-diacyl-sn-glycerol + H2O = a 2-acylglycerol + a fatty acid + H(+). The enzyme catalyses 1-octadecanoyl-2-(5Z,8Z,11Z,14Z-eicosatetraenoyl)-sn-glycerol + H2O = 2-(5Z,8Z,11Z,14Z-eicosatetraenoyl)-glycerol + octadecanoate + H(+). It catalyses the reaction 1,2-di-(9Z-octadecenoyl)-sn-glycerol + H2O = 2-(9Z-octadecenoyl)-glycerol + (9Z)-octadecenoate + H(+). The catalysed reaction is 1-(9Z-octadecenoyl)-2-(5Z,8Z,11Z,14Z-eicosatetraenoyl)-sn-glycerol + H2O = 2-(5Z,8Z,11Z,14Z-eicosatetraenoyl)-glycerol + (9Z)-octadecenoate + H(+). It carries out the reaction 1-(9Z-octadecenoyl)-2-octadecanoyl-sn-glycerol + H2O = 2-octadecanoylglycerol + (9Z)-octadecenoate + H(+). The enzyme catalyses 1-(9Z-octadecenoyl)-2-(9Z,12Z-octadecadienoyl)-sn-glycerol + H2O = 2-(9Z,12Z-octadecadienoyl)-glycerol + (9Z)-octadecenoate + H(+). It catalyses the reaction 1-(9Z-octadecenoyl)-2-O-(5Z,8Z,11Z,14Z-eicosatetraenyl)-sn-glycerol + H2O = 2-O-(5Z,8Z,11Z,14Z)-eicosatetraenylglycerol + (9Z)-octadecenoate + H(+). The catalysed reaction is a triacylglycerol + H2O = a diacylglycerol + a fatty acid + H(+). It carries out the reaction 1,2,3-tri-(5Z,8Z,11Z,14Z-eicosatetraenoyl)-glycerol + H2O = 1,2-di-(5Z,8Z,11Z,14Z-eicosatetraenoyl)-glycerol + (5Z,8Z,11Z,14Z)-eicosatetraenoate + H(+). The enzyme catalyses 1,2,3-(4Z,7Z,10Z,13Z,16Z,19Z-docosahexaenoyl)-glycerol + H2O = 1,2-di-(4Z,7Z,10Z,13Z,16Z,19Z-docosahexaenoyl)-glycerol + (4Z,7Z,10Z,13Z,16Z,19Z)-docosahexaenoate + H(+). Its activity is regulated as follows. Inhibited by the 1,2,3-triazole urea covalent inhibitors KT109 and KT172. Inhibited by p-hydroxy-mercuri-benzoate and HgCl(2), but not by PMSF. Also inhibited by RHC80267, a drug that blocks 2-AG formation. In terms of biological role, lipase that catalyzes the hydrolysis of arachidonic acid (AA)-esterified diacylglycerols (DAGs) to produce the principal endocannabinoid, 2-arachidonoylglycerol (2-AG) which can be further cleaved by downstream enzymes to release arachidonic acid (AA) for cyclooxygenase (COX)-mediated eicosanoid production. Preferentially hydrolyzes DAGs at the sn-1 position in a calcium-dependent manner and has negligible activity against other lipids including monoacylglycerols and phospholipids. Plays a key role in the regulation of 2-AG and AA pools utilized by COX1/2 to generate lipid mediators of macrophage and microglia inflammatory responses. Also functions as a polyunsaturated fatty acids-specific triacylglycerol lipase in macrophages. Plays an important role to support the metabolic and signaling demands of macrophages. This is Diacylglycerol lipase-beta (Daglb) from Mus musculus (Mouse).